Reading from the N-terminus, the 277-residue chain is Putative pyruvate, phosphate dikinase regulatory protein (277 aa).

Residue 151–158 participates in ADP binding; sequence GISRTSKT.

It belongs to the pyruvate, phosphate/water dikinase regulatory protein family. PDRP subfamily.

It carries out the reaction N(tele)-phospho-L-histidyl/L-threonyl-[pyruvate, phosphate dikinase] + ADP = N(tele)-phospho-L-histidyl/O-phospho-L-threonyl-[pyruvate, phosphate dikinase] + AMP + H(+). The catalysed reaction is N(tele)-phospho-L-histidyl/O-phospho-L-threonyl-[pyruvate, phosphate dikinase] + phosphate + H(+) = N(tele)-phospho-L-histidyl/L-threonyl-[pyruvate, phosphate dikinase] + diphosphate. In terms of biological role, bifunctional serine/threonine kinase and phosphorylase involved in the regulation of the pyruvate, phosphate dikinase (PPDK) by catalyzing its phosphorylation/dephosphorylation. The protein is Putative pyruvate, phosphate dikinase regulatory protein of Alkaliphilus oremlandii (strain OhILAs) (Clostridium oremlandii (strain OhILAs)).